The primary structure comprises 115 residues: T cell receptor beta variable 18 (115 aa).

The N-terminal stretch at 1-21 (MDTRLLCCAVICLLGAGLSNA) is a signal peptide. Residues 22-115 (GVMQNPRHLV…SAAYFCASSP (94 aa)) enclose the Ig-like domain. A disulfide bond links Cys42 and Cys111.

As to quaternary structure, alpha-beta TR is a heterodimer composed of an alpha and beta chain; disulfide-linked. The alpha-beta TR is associated with the transmembrane signaling CD3 coreceptor proteins to form the TR-CD3 (TcR or TCR). The assembly of alpha-beta TR heterodimers with CD3 occurs in the endoplasmic reticulum where a single alpha-beta TR heterodimer associates with one CD3D-CD3E heterodimer, one CD3G-CD3E heterodimer and one CD247 homodimer forming a stable octameric structure. CD3D-CD3E and CD3G-CD3E heterodimers preferentially associate with TR alpha and TR beta chains, respectively. The association of the CD247 homodimer is the last step of TcR assembly in the endoplasmic reticulum and is required for transport to the cell surface.

The protein resides in the cell membrane. In terms of biological role, v region of the variable domain of T cell receptor (TR) beta chain that participates in the antigen recognition. Alpha-beta T cell receptors are antigen specific receptors which are essential to the immune response and are present on the cell surface of T lymphocytes. Recognize peptide-major histocompatibility (MH) (pMH) complexes that are displayed by antigen presenting cells (APC), a prerequisite for efficient T cell adaptive immunity against pathogens. Binding of alpha-beta TR to pMH complex initiates TR-CD3 clustering on the cell surface and intracellular activation of LCK that phosphorylates the ITAM motifs of CD3G, CD3D, CD3E and CD247 enabling the recruitment of ZAP70. In turn ZAP70 phosphorylates LAT, which recruits numerous signaling molecules to form the LAT signalosome. The LAT signalosome propagates signal branching to three major signaling pathways, the calcium, the mitogen-activated protein kinase (MAPK) kinase and the nuclear factor NF-kappa-B (NF-kB) pathways, leading to the mobilization of transcription factors that are critical for gene expression and essential for T cell growth and differentiation. The T cell repertoire is generated in the thymus, by V-(D)-J rearrangement. This repertoire is then shaped by intrathymic selection events to generate a peripheral T cell pool of self-MH restricted, non-autoaggressive T cells. Post-thymic interaction of alpha-beta TR with the pMH complexes shapes TR structural and functional avidity. The sequence is that of T cell receptor beta variable 18 from Homo sapiens (Human).